A 1197-amino-acid chain; its full sequence is ATP-dependent helicase/nuclease subunit A (1197 aa).

The 457-residue stretch at 2-458 (RQWTKEQQAA…IDLAKNFRSR (457 aa)) folds into the UvrD-like helicase ATP-binding domain. An ATP-binding site is contributed by 23–30 (AAAGSGKT). The 290-residue stretch at 485–774 (RAALYQGTEF…RIMSIHKSKG (290 aa)) folds into the UvrD-like helicase C-terminal domain.

It belongs to the helicase family. AddA subfamily. In terms of assembly, heterodimer of AddA and AddB/RexB. The cofactor is Mg(2+).

It carries out the reaction Couples ATP hydrolysis with the unwinding of duplex DNA by translocating in the 3'-5' direction.. The enzyme catalyses ATP + H2O = ADP + phosphate + H(+). In terms of biological role, the heterodimer acts as both an ATP-dependent DNA helicase and an ATP-dependent, dual-direction single-stranded exonuclease. Recognizes the chi site generating a DNA molecule suitable for the initiation of homologous recombination. The AddA nuclease domain is required for chi fragment generation; this subunit has the helicase and 3' -&gt; 5' nuclease activities. The sequence is that of ATP-dependent helicase/nuclease subunit A from Alkaliphilus oremlandii (strain OhILAs) (Clostridium oremlandii (strain OhILAs)).